The sequence spans 35 residues: Tamulustoxin-2 (35 aa).

3 disulfides stabilise this stretch: Cys2–Cys22, Cys7–Cys31, and Cys11–Cys33.

It belongs to the short scorpion toxin superfamily. Potassium channel inhibitor family. Expressed by the venom gland.

The protein localises to the secreted. Blocks Kv1.6/KCNA6 potassium channels. The protein is Tamulustoxin-2 of Hottentotta tamulus (Eastern Indian scorpion).